Here is a 169-residue protein sequence, read N- to C-terminus: 6,7-dimethyl-8-ribityllumazine synthase (169 aa).

5-amino-6-(D-ribitylamino)uracil contacts are provided by residues Trp27, 61 to 63 (SYE), and 90 to 92 (VLI). 95 to 96 (ST) is a binding site for (2S)-2-hydroxy-3-oxobutyl phosphate. His98 serves as the catalytic Proton donor. Phe123 provides a ligand contact to 5-amino-6-(D-ribitylamino)uracil. Arg137 serves as a coordination point for (2S)-2-hydroxy-3-oxobutyl phosphate.

Belongs to the DMRL synthase family. As to quaternary structure, homopentamer.

Its subcellular location is the mitochondrion intermembrane space. It carries out the reaction (2S)-2-hydroxy-3-oxobutyl phosphate + 5-amino-6-(D-ribitylamino)uracil = 6,7-dimethyl-8-(1-D-ribityl)lumazine + phosphate + 2 H2O + H(+). It participates in cofactor biosynthesis; riboflavin biosynthesis; riboflavin from 2-hydroxy-3-oxobutyl phosphate and 5-amino-6-(D-ribitylamino)uracil: step 1/2. Its function is as follows. Catalyzes the formation of 6,7-dimethyl-8-ribityllumazine by condensation of 5-amino-6-(D-ribitylamino)uracil with 3,4-dihydroxy-2-butanone 4-phosphate. This is the penultimate step in the biosynthesis of riboflavin. The chain is 6,7-dimethyl-8-ribityllumazine synthase (RIB4) from Saccharomyces cerevisiae (strain ATCC 204508 / S288c) (Baker's yeast).